Here is a 426-residue protein sequence, read N- to C-terminus: Serine--tRNA ligase (426 aa).

231–233 (TLE) contacts L-serine. 262 to 264 (RSE) serves as a coordination point for ATP. Glu285 provides a ligand contact to L-serine. 349 to 352 (EISS) contributes to the ATP binding site. An L-serine-binding site is contributed by Ser385.

It belongs to the class-II aminoacyl-tRNA synthetase family. Type-1 seryl-tRNA synthetase subfamily. As to quaternary structure, homodimer. The tRNA molecule binds across the dimer.

The protein resides in the cytoplasm. The enzyme catalyses tRNA(Ser) + L-serine + ATP = L-seryl-tRNA(Ser) + AMP + diphosphate + H(+). The catalysed reaction is tRNA(Sec) + L-serine + ATP = L-seryl-tRNA(Sec) + AMP + diphosphate + H(+). Its pathway is aminoacyl-tRNA biosynthesis; selenocysteinyl-tRNA(Sec) biosynthesis; L-seryl-tRNA(Sec) from L-serine and tRNA(Sec): step 1/1. Functionally, catalyzes the attachment of serine to tRNA(Ser). Is also able to aminoacylate tRNA(Sec) with serine, to form the misacylated tRNA L-seryl-tRNA(Sec), which will be further converted into selenocysteinyl-tRNA(Sec). This is Serine--tRNA ligase from Malacoplasma penetrans (strain HF-2) (Mycoplasma penetrans).